Consider the following 208-residue polypeptide: FMN-dependent NADH:quinone oxidoreductase (208 aa).

FMN-binding positions include 17-19 (SNS), 99-102 (MWNL), and 143-146 (SRGG).

It belongs to the azoreductase type 1 family. Homodimer. FMN is required as a cofactor.

The catalysed reaction is 2 a quinone + NADH + H(+) = 2 a 1,4-benzosemiquinone + NAD(+). The enzyme catalyses N,N-dimethyl-1,4-phenylenediamine + anthranilate + 2 NAD(+) = 2-(4-dimethylaminophenyl)diazenylbenzoate + 2 NADH + 2 H(+). Its function is as follows. Quinone reductase that provides resistance to thiol-specific stress caused by electrophilic quinones. Functionally, also exhibits azoreductase activity. Catalyzes the reductive cleavage of the azo bond in aromatic azo compounds to the corresponding amines. In Staphylococcus aureus (strain bovine RF122 / ET3-1), this protein is FMN-dependent NADH:quinone oxidoreductase.